The following is a 550-amino-acid chain: Protein UshA (550 aa).

A signal peptide spans M1–A25. A divalent metal cation contacts are provided by D41, H43, D84, N116, H217, H252, and Q254. A disulfide bridge connects residues C258 and C275. Substrate is bound by residues R375–R379 and F498–D504.

The protein belongs to the 5'-nucleotidase family. It depends on Co(2+) as a cofactor.

It localises to the periplasm. It catalyses the reaction UDP-sugar + H2O = UMP + alpha-D-aldose 1-phosphate.. The catalysed reaction is a ribonucleoside 5'-phosphate + H2O = a ribonucleoside + phosphate. Its function is as follows. Degradation of external UDP-glucose to uridine monophosphate and glucose-1-phosphate, which can then be used by the cell. The polypeptide is Protein UshA (ushA) (Yersinia enterocolitica serotype O:8 / biotype 1B (strain NCTC 13174 / 8081)).